A 190-amino-acid chain; its full sequence is RNA pyrophosphohydrolase (190 aa).

The region spanning 6–149 (GYRPNVGIVL…KRSVYARALC (144 aa)) is the Nudix hydrolase domain. Positions 38 to 59 (GGMHSDETPVEAMYRELNEETG) match the Nudix box motif.

The protein belongs to the Nudix hydrolase family. RppH subfamily. It depends on a divalent metal cation as a cofactor.

Its function is as follows. Accelerates the degradation of transcripts by removing pyrophosphate from the 5'-end of triphosphorylated RNA, leading to a more labile monophosphorylated state that can stimulate subsequent ribonuclease cleavage. The sequence is that of RNA pyrophosphohydrolase from Xylella fastidiosa (strain Temecula1 / ATCC 700964).